The following is a 335-amino-acid chain: Serpentine receptor class XA 10 (335 aa).

At 1–10 the chain is on the extracellular side; that stretch reads MDVDAAVVKR. Residues 11–31 form a helical membrane-spanning segment; the sequence is IALWVYETCSVFNLFYCITLS. Residues 32 to 46 lie on the Cytoplasmic side of the membrane; that stretch reads LAIKTSKNNALPATY. A helical membrane pass occupies residues 47–67; the sequence is IYNMAISNALLVIFGIMVYIL. Topologically, residues 68-82 are extracellular; the sequence is PYYMSDKTYKTYRDS. A helical membrane pass occupies residues 83 to 103; that stretch reads IGAMISVGVTFNYLHPMLTLI. Topologically, residues 104–126 are cytoplasmic; sequence LMTINRIAVVVSMQASQLFTSSK. The helical transmembrane segment at 127–147 threads the bilayer; the sequence is IWLYTSFHMTANFACLIIPYL. Topologically, residues 148–177 are extracellular; it reads SECRINYDIRKVGFISECAPDRHQITTFSN. The chain crosses the membrane as a helical span at residues 178 to 198; that stretch reads YYSVFFPFVAFFFNVLVIINF. Over 199–238 the chain is Cytoplasmic; it reads KLQRSPTYTKIKNMFRRGNGDQFTSMPSDVLKAKKKTERM. A helical transmembrane segment spans residues 239–259; it reads LMIQAFITAFYLSVYELTSLV. Residues 260–276 lie on the Extracellular side of the membrane; that stretch reads LRVVPELFGNLSLDGKL. Residues 277–297 traverse the membrane as a helical segment; the sequence is AFTYFRLAQVPCHVFLVYFIF. At 298–319 the chain is on the cytoplasmic side; the sequence is TPVTRKIYMDFVRERVFCMKPA.

Belongs to the nematode receptor-like protein srxa family.

The protein resides in the membrane. This chain is Serpentine receptor class XA 10 (srxa-10), found in Caenorhabditis elegans.